A 226-amino-acid chain; its full sequence is Sugar fermentation stimulation protein homolog (226 aa).

The protein belongs to the SfsA family.

This chain is Sugar fermentation stimulation protein homolog, found in Picrophilus torridus (strain ATCC 700027 / DSM 9790 / JCM 10055 / NBRC 100828 / KAW 2/3).